A 301-amino-acid chain; its full sequence is uncharacterized protein (301 aa).

The signal sequence occupies residues M1–A22. The 270-residue stretch at P31–R300 folds into the GP-PDE domain.

This is an uncharacterized protein from Mycobacterium tuberculosis (strain ATCC 25618 / H37Rv).